Consider the following 263-residue polypeptide: 3-methyl-2-oxobutanoate hydroxymethyltransferase (263 aa).

D45 and D84 together coordinate Mg(2+). 3-methyl-2-oxobutanoate contacts are provided by residues 45 to 46 (DS), D84, and K112. E114 contributes to the Mg(2+) binding site. E181 serves as the catalytic Proton acceptor.

Belongs to the PanB family. As to quaternary structure, homodecamer; pentamer of dimers. Mg(2+) is required as a cofactor.

It is found in the cytoplasm. It carries out the reaction 3-methyl-2-oxobutanoate + (6R)-5,10-methylene-5,6,7,8-tetrahydrofolate + H2O = 2-dehydropantoate + (6S)-5,6,7,8-tetrahydrofolate. It functions in the pathway cofactor biosynthesis; (R)-pantothenate biosynthesis; (R)-pantoate from 3-methyl-2-oxobutanoate: step 1/2. Catalyzes the reversible reaction in which hydroxymethyl group from 5,10-methylenetetrahydrofolate is transferred onto alpha-ketoisovalerate to form ketopantoate. The chain is 3-methyl-2-oxobutanoate hydroxymethyltransferase from Buchnera aphidicola subsp. Acyrthosiphon pisum (strain APS) (Acyrthosiphon pisum symbiotic bacterium).